The chain runs to 214 residues: Probable nicotinate-nucleotide adenylyltransferase (214 aa).

The protein belongs to the NadD family.

It catalyses the reaction nicotinate beta-D-ribonucleotide + ATP + H(+) = deamido-NAD(+) + diphosphate. It functions in the pathway cofactor biosynthesis; NAD(+) biosynthesis; deamido-NAD(+) from nicotinate D-ribonucleotide: step 1/1. Its function is as follows. Catalyzes the reversible adenylation of nicotinate mononucleotide (NaMN) to nicotinic acid adenine dinucleotide (NaAD). This is Probable nicotinate-nucleotide adenylyltransferase from Rhodopirellula baltica (strain DSM 10527 / NCIMB 13988 / SH1).